The sequence spans 1366 residues: Collagen alpha-2(I) chain (1366 aa).

The first 22 residues, M1–C22, serve as a signal peptide directing secretion. Q23 bears the Pyrrolidone carboxylic acid mark. A propeptide spans Q23–A79 (N-terminal propeptide). Residues E28–R44 are compositionally biased toward basic and acidic residues. Residues E28–P1130 are disordered. Residues P47, P50, P62, P65, P68, and P71 each carry the 4-hydroxyproline modification. Residues T59–P71 are compositionally biased toward pro residues. Q80 carries the pyrrolidone carboxylic acid modification. K84 is subject to Allysine. Residues K84 to G94 are compositionally biased toward gly residues. Residues L95 to K140 show a composition bias toward low complexity. Residues P102 and P108 each carry the 4-hydroxyproline modification. Positions A141–E155 are enriched in basic and acidic residues. A 5-hydroxylysine; alternate modification is found at K177. K177 is a glycosylation site (O-linked (Gal...) hydroxylysine; alternate). Composition is skewed to low complexity over residues V225–P254, A269–P293, P300–P321, P330–V345, L398–A410, and P419–P434. 4-hydroxyproline is present on residues P420, P441, and P444. 2 stretches are compositionally biased toward low complexity: residues L470–P489 and A513–Q531. Over residues G538 to G547 the composition is skewed to gly residues. Composition is skewed to low complexity over residues P594–P611, E623–A648, R663–S710, and V717–A737. Basic and acidic residues predominate over residues K738–K747. Positions V752–A765 are enriched in low complexity. Gly residues predominate over residues G775–G784. 5 stretches are compositionally biased toward low complexity: residues T786–T795, S849–P876, L884–N932, P956–K974, and P983–P1001. The span at R1005–P1016 shows a compositional bias: basic and acidic residues. Over residues A1089 to P1101 the composition is skewed to pro residues. The propeptide at D1120–K1366 is C-terminal propeptide. One can recognise a Fibrillar collagen NC1 domain in the interval Y1133 to K1366. Intrachain disulfides connect C1163-C1195, C1203-C1364, and C1272-C1317. 5 residues coordinate Ca(2+): D1181, N1183, Q1184, C1186, and D1189. N-linked (GlcNAc...) asparagine glycosylation occurs at N1267.

The protein belongs to the fibrillar collagen family. Trimers of one alpha 2(I) and two alpha 1(I) chains. Interacts (via C-terminus) with TMEM131 (via PapD-L domain); the interaction is direct and is involved in assembly and TRAPPIII ER-to-Golgi transport complex-dependent secretion of collagen. Prolines at the third position of the tripeptide repeating unit (G-X-Y) are hydroxylated in some or all of the chains. In terms of tissue distribution, forms the fibrils of tendon, ligaments and bones. In bones the fibrils are mineralized with calcium hydroxyapatite.

It is found in the secreted. The protein resides in the extracellular space. The protein localises to the extracellular matrix. Its function is as follows. Type I collagen is a member of group I collagen (fibrillar forming collagen). In Homo sapiens (Human), this protein is Collagen alpha-2(I) chain (COL1A2).